A 371-amino-acid polypeptide reads, in one-letter code: Cytochrome b (371 aa).

4 helical membrane-spanning segments follow: residues 25–45, 69–90, 105–125, and 170–190; these read FGSMLLTCLALQTLTGFFLAV, WMMQNLHAIGASMFFICIYIHI, WMSGITLLIILMATAFFGYVL, and FFALHFILPFAIISLSSLHVI. Histidine 75 and histidine 89 together coordinate heme b. 2 residues coordinate heme b: histidine 174 and histidine 188. Position 193 (histidine 193) interacts with a ubiquinone. The next 4 helical transmembrane spans lie at 218-238, 280-300, 312-332, and 339-358; these read YKDLLLLTLMILSLLIIVSFF, LGGALALVMSIMILLTIPFTH, LSQLMFWTLVSTFITITWAAT, and FIIISQVTATLYFTFFISTP.

The protein belongs to the cytochrome b family. In terms of assembly, the cytochrome bc1 complex contains 3 respiratory subunits (MT-CYB, CYC1 and UQCRFS1), 2 core proteins (UQCRC1 and UQCRC2) and probably 6 low-molecular weight proteins. The cofactor is heme b.

It is found in the mitochondrion inner membrane. Functionally, component of the ubiquinol-cytochrome c reductase complex (complex III or cytochrome b-c1 complex) that is part of the mitochondrial respiratory chain. The b-c1 complex mediates electron transfer from ubiquinol to cytochrome c. Contributes to the generation of a proton gradient across the mitochondrial membrane that is then used for ATP synthesis. This Python sebae (African rock python) protein is Cytochrome b (MT-CYB).